The following is a 116-amino-acid chain: Large ribosomal subunit protein bL17 (116 aa).

It belongs to the bacterial ribosomal protein bL17 family. Part of the 50S ribosomal subunit. Contacts protein L32.

This is Large ribosomal subunit protein bL17 from Helicobacter hepaticus (strain ATCC 51449 / 3B1).